Consider the following 314-residue polypeptide: Ferrochelatase (314 aa).

The Fe cation site is built by His-188 and Glu-269.

This sequence belongs to the ferrochelatase family.

The protein localises to the cytoplasm. It catalyses the reaction heme b + 2 H(+) = protoporphyrin IX + Fe(2+). It participates in porphyrin-containing compound metabolism; protoheme biosynthesis; protoheme from protoporphyrin-IX: step 1/1. Catalyzes the ferrous insertion into protoporphyrin IX. This chain is Ferrochelatase, found in Campylobacter fetus subsp. fetus (strain 82-40).